We begin with the raw amino-acid sequence, 271 residues long: HTH-type transcriptional repressor AllR (271 aa).

An HTH iclR-type domain is found at 21–83 (AQALERGIAI…SQLGWWHIGL (63 aa)). Residues 43 to 62 (VSDISLNLDLPLSTTFRLLK) constitute a DNA-binding region (H-T-H motif). One can recognise an IclR-ED domain in the interval 98 to 267 (VLSVAGPFMR…ARDISTALGL (170 aa)). Glyoxylate-binding positions include 154 to 156 (SGA), Asp-207, Cys-217, and 234 to 236 (SIS).

Its function is as follows. Negative regulator of allantoin and glyoxylate utilization operons. Binds to the gcl promoter and to the allS-allA intergenic region. In Escherichia coli O6:H1 (strain CFT073 / ATCC 700928 / UPEC), this protein is HTH-type transcriptional repressor AllR (allR).